A 240-amino-acid chain; its full sequence is Protein Thf1 (240 aa).

Residues 186–222 are a coiled coil; that stretch reads KDLDLYRSNLEKVDQLLKVLEDAAEAERKKKEKQAAS. The segment at 212–240 is disordered; it reads ERKKKEKQAASTTPAIEEAPVTTAESSES.

The protein belongs to the THF1 family.

In terms of biological role, may be involved in photosynthetic membrane biogenesis. The chain is Protein Thf1 from Synechocystis sp. (strain ATCC 27184 / PCC 6803 / Kazusa).